Consider the following 415-residue polypeptide: MTTQSQGGGLLHRLAQGSLVKQILVGLVLGILLAWLSKPAAIAVGLLGTLFVGALKAVAPVLVLMLVMASIANHKHGQKTNIRPILWLYLLGTFSAALTAVLFSFLFPSTLHLVAGATDITPPTGIVGVLRDLLLSMVANPIDALLKGNYIGILVWAVGLGFALRHGNDTTKNLVNDMSDAVTFMVKLVIRFAPIGIFGLVASTLATTGFDTLWGYAQLLMVLIGCMFLVALVINPLIVFAKIRRNPYPLVFACLRESGVTAFFTRSSAANIPVNMALCEKLNLDRDTYSVSIPLGATINMAGAAITITVLTLAAVHTLGIAVDVPTALLLSVVASLCACGASGVAGGSLLLIPLACNMFGIPNDIAMQVVAVGFIIGVLQDSCETALNSSTDVLFTAAACQAEDARLASHALRN.

Helical transmembrane passes span 23–43 (ILVGLVLGILLAWLSKPAAIA), 47–67 (LGTLFVGALKAVAPVLVLMLV), 85–105 (ILWLYLLGTFSAALTAVLFSF), 144–164 (ALLKGNYIGILVWAVGLGFAL), 181–201 (AVTFMVKLVIRFAPIGIFGLV), 220–240 (LMVLIGCMFLVALVINPLIVF), 303–323 (GAAITITVLTLAAVHTLGIAV), and 333–353 (VVASLCACGASGVAGGSLLLI).

It belongs to the dicarboxylate/amino acid:cation symporter (DAACS) (TC 2.A.23) family.

It is found in the cell inner membrane. It catalyses the reaction L-serine(in) + Na(+)(in) = L-serine(out) + Na(+)(out). The catalysed reaction is L-threonine(in) + Na(+)(in) = L-threonine(out) + Na(+)(out). In terms of biological role, involved in the import of serine and threonine into the cell, with the concomitant import of sodium (symport system). This is Serine/threonine transporter SstT from Cronobacter sakazakii (strain ATCC BAA-894) (Enterobacter sakazakii).